The following is a 66-amino-acid chain: uncharacterized protein (66 aa).

Residues 1–18 (MSTTSSSSTFSTRTASLS) are compositionally biased toward low complexity. The interval 1 to 22 (MSTTSSSSTFSTRTASLSQSYT) is disordered.

This is an uncharacterized protein from Schizosaccharomyces pombe (strain 972 / ATCC 24843) (Fission yeast).